A 474-amino-acid polypeptide reads, in one-letter code: UDP-N-acetylmuramoyl-L-alanyl-D-glutamate--2,6-diaminopimelate ligase (474 aa).

S21 is a binding site for UDP-N-acetyl-alpha-D-muramoyl-L-alanyl-D-glutamate. 93–99 (GTNGKSS) provides a ligand contact to ATP. UDP-N-acetyl-alpha-D-muramoyl-L-alanyl-D-glutamate is bound by residues 139–140 (TT), S166, Q172, and R174. K206 is subject to N6-carboxylysine. Residues R367, 391-394 (DNPR), G441, and E445 each bind meso-2,6-diaminopimelate. Residues 391 to 394 (DNPR) carry the Meso-diaminopimelate recognition motif motif.

It belongs to the MurCDEF family. MurE subfamily. Requires Mg(2+) as cofactor. Carboxylation is probably crucial for Mg(2+) binding and, consequently, for the gamma-phosphate positioning of ATP.

The protein resides in the cytoplasm. It carries out the reaction UDP-N-acetyl-alpha-D-muramoyl-L-alanyl-D-glutamate + meso-2,6-diaminopimelate + ATP = UDP-N-acetyl-alpha-D-muramoyl-L-alanyl-gamma-D-glutamyl-meso-2,6-diaminopimelate + ADP + phosphate + H(+). It functions in the pathway cell wall biogenesis; peptidoglycan biosynthesis. Catalyzes the addition of meso-diaminopimelic acid to the nucleotide precursor UDP-N-acetylmuramoyl-L-alanyl-D-glutamate (UMAG) in the biosynthesis of bacterial cell-wall peptidoglycan. In Rickettsia bellii (strain RML369-C), this protein is UDP-N-acetylmuramoyl-L-alanyl-D-glutamate--2,6-diaminopimelate ligase.